Reading from the N-terminus, the 484-residue chain is Glycogen synthase (484 aa).

Residue Lys15 coordinates ADP-alpha-D-glucose.

Belongs to the glycosyltransferase 1 family. Bacterial/plant glycogen synthase subfamily.

It catalyses the reaction [(1-&gt;4)-alpha-D-glucosyl](n) + ADP-alpha-D-glucose = [(1-&gt;4)-alpha-D-glucosyl](n+1) + ADP + H(+). It functions in the pathway glycan biosynthesis; glycogen biosynthesis. Its function is as follows. Synthesizes alpha-1,4-glucan chains using ADP-glucose. The sequence is that of Glycogen synthase from Koribacter versatilis (strain Ellin345).